The sequence spans 149 residues: UPF0260 protein Pfl01_1392 (149 aa).

It belongs to the UPF0260 family.

This chain is UPF0260 protein Pfl01_1392, found in Pseudomonas fluorescens (strain Pf0-1).